The sequence spans 120 residues: Seripauperin-20 (120 aa).

A helical transmembrane segment spans residues 7–25 (IAAGVAAIAAGASATTTLA).

The protein belongs to the SRP1/TIP1 family. Seripauperin subfamily.

It localises to the membrane. The sequence is that of Seripauperin-20 (PAU20) from Saccharomyces cerevisiae (strain ATCC 204508 / S288c) (Baker's yeast).